A 76-amino-acid chain; its full sequence is Acyl carrier protein (76 aa).

One can recognise a Carrier domain in the interval 1–76 (MATFDDVKDV…AAIDYIESKQ (76 aa)). At serine 36 the chain carries O-(pantetheine 4'-phosphoryl)serine.

The protein belongs to the acyl carrier protein (ACP) family. 4'-phosphopantetheine is transferred from CoA to a specific serine of apo-ACP by AcpS. This modification is essential for activity because fatty acids are bound in thioester linkage to the sulfhydryl of the prosthetic group.

The protein resides in the cytoplasm. It functions in the pathway lipid metabolism; fatty acid biosynthesis. Functionally, carrier of the growing fatty acid chain in fatty acid biosynthesis. The polypeptide is Acyl carrier protein (Deinococcus deserti (strain DSM 17065 / CIP 109153 / LMG 22923 / VCD115)).